We begin with the raw amino-acid sequence, 178 residues long: Interleukin-10 (178 aa).

The N-terminal stretch at 1–18 (MHSSALLCCLVLLTGVRA) is a signal peptide. 2 disulfides stabilise this stretch: C30–C126 and C80–C132. N-linked (GlcNAc...) asparagine glycosylation is present at N134.

Belongs to the IL-10 family. Homodimer. Interacts with IL10RA and IL10RB.

The protein localises to the secreted. Major immune regulatory cytokine that acts on many cells of the immune system where it has profound anti-inflammatory functions, limiting excessive tissue disruption caused by inflammation. Mechanistically, IL10 binds to its heterotetrameric receptor comprising IL10RA and IL10RB leading to JAK1 and STAT2-mediated phosphorylation of STAT3. In turn, STAT3 translocates to the nucleus where it drives expression of anti-inflammatory mediators. Targets antigen-presenting cells (APCs) such as macrophages and monocytes and inhibits their release of pro-inflammatory cytokines including granulocyte-macrophage colony-stimulating factor /GM-CSF, granulocyte colony-stimulating factor/G-CSF, IL-1 alpha, IL-1 beta, IL-6, IL-8 and TNF-alpha. Also interferes with antigen presentation by reducing the expression of MHC-class II and co-stimulatory molecules, thereby inhibiting their ability to induce T cell activation. In addition, controls the inflammatory response of macrophages by reprogramming essential metabolic pathways including mTOR signaling. This is Interleukin-10 (IL10) from Macaca fascicularis (Crab-eating macaque).